A 512-amino-acid polypeptide reads, in one-letter code: MFEVVPFDIEIGQYKVMLNIADARAMGLNPGDRVRVRTRGASLTAILDVTGQMIGQGQVGIFTEAFRDLKEAKSVEISPAPRPASISYIKMLMDRQKLSEDQIRSIVRDIVYNNLSEIELSAYITASYIHNLDPQETEWLTRAMIETGERIYFDKHPVVDKHSIGGVPGNKVSMLVVPIVAASGLLIPKTSSRAITGAGGTADLMEVLAPVEFTADEIKEITETVGGVIAWGGATNIAPADDRLIKAEYALAIDPYSQMLASIMAKKGAVGADAVVVDMPTGPGTKLETPEKARVLAKDLTDLGERLGIRVECAMTFGGSPVGRTVGPALEVREALKMLETGEGPNSLREKSLALAGILLEMGGVAARGEGYRAAEEILVSGKAHRKLMEIVEAQGGDPKIRSEDIQIGEHQKQILSPTNGYVVAFYNKRIIEIARAAGAPGDKRAGVIIHKKMGEIVKKGEPLLTICSSTDWELECAVKMCSMRDALEQPPIVVEGMLLERYPTERYPRTI.

Residues G166, S192–G197, and T201 each bind AMP. Catalysis depends on D254, which acts as the Proton donor. AMP contacts are provided by S262 and K286.

The protein belongs to the thymidine/pyrimidine-nucleoside phosphorylase family. Type 2 subfamily.

The catalysed reaction is AMP + phosphate = alpha-D-ribose 1,5-bisphosphate + adenine. It carries out the reaction CMP + phosphate = cytosine + alpha-D-ribose 1,5-bisphosphate. It catalyses the reaction UMP + phosphate = alpha-D-ribose 1,5-bisphosphate + uracil. Catalyzes the conversion of AMP and phosphate to adenine and ribose 1,5-bisphosphate (R15P). Exhibits phosphorylase activity toward CMP and UMP in addition to AMP. Functions in an archaeal AMP degradation pathway, together with R15P isomerase and RubisCO. The sequence is that of AMP phosphorylase from Methanothrix thermoacetophila (strain DSM 6194 / JCM 14653 / NBRC 101360 / PT) (Methanosaeta thermophila).